The sequence spans 353 residues: Forkhead box protein I3-A (353 aa).

Positions 116-210 form a DNA-binding region, fork-head; sequence RPPYSYSALI…DNGNFRRKRK (95 aa). The interval 201 to 255 is disordered; sequence DNGNFRRKRKRKSDSLAEEEGKGYSGSDSALSSPKNPSDSSERGNSPISTDQAPC. The short motif at 206 to 212 is the Nuclear localization signal element; it reads RRKRKRK. A compositionally biased stretch (basic and acidic residues) spans 213-222; sequence SDSLAEEEGK. Polar residues predominate over residues 226–252; the sequence is GSDSALSSPKNPSDSSERGNSPISTDQ.

In terms of tissue distribution, expressed in ionocyte precursors.

It is found in the nucleus. Functionally, transcription factor required for epithelial cell differentiation. Involved in specification of skin ionocytes from epidermal precursors. In Danio rerio (Zebrafish), this protein is Forkhead box protein I3-A.